The primary structure comprises 427 residues: Glutamate-1-semialdehyde 2,1-aminomutase (427 aa).

An N6-(pyridoxal phosphate)lysine modification is found at K265.

The protein belongs to the class-III pyridoxal-phosphate-dependent aminotransferase family. HemL subfamily. Homodimer. Requires pyridoxal 5'-phosphate as cofactor.

It localises to the cytoplasm. The catalysed reaction is (S)-4-amino-5-oxopentanoate = 5-aminolevulinate. Its pathway is porphyrin-containing compound metabolism; protoporphyrin-IX biosynthesis; 5-aminolevulinate from L-glutamyl-tRNA(Glu): step 2/2. The sequence is that of Glutamate-1-semialdehyde 2,1-aminomutase from Pseudomonas putida (strain W619).